We begin with the raw amino-acid sequence, 203 residues long: Urease accessory protein UreG (203 aa).

14–21 (GPVGSGKT) lines the GTP pocket.

The protein belongs to the SIMIBI class G3E GTPase family. UreG subfamily. In terms of assembly, homodimer. UreD, UreF and UreG form a complex that acts as a GTP-hydrolysis-dependent molecular chaperone, activating the urease apoprotein by helping to assemble the nickel containing metallocenter of UreC. The UreE protein probably delivers the nickel.

It localises to the cytoplasm. Its function is as follows. Facilitates the functional incorporation of the urease nickel metallocenter. This process requires GTP hydrolysis, probably effectuated by UreG. The polypeptide is Urease accessory protein UreG (Sinorhizobium fredii (strain NBRC 101917 / NGR234)).